A 388-amino-acid chain; its full sequence is Succinate--CoA ligase [ADP-forming] subunit beta (388 aa).

The ATP-grasp domain occupies 9 to 245; it reads KALLKEYGMP…KSQENERELK (237 aa). ATP is bound by residues Lys-46, 53-55, Glu-100, Tyr-103, and Glu-108; that span reads GRG. Mg(2+) is bound by residues Asn-200 and Asp-214. Residues Asn-265 and 322-324 contribute to the substrate site; that span reads GIV.

This sequence belongs to the succinate/malate CoA ligase beta subunit family. As to quaternary structure, heterotetramer of two alpha and two beta subunits. Mg(2+) serves as cofactor.

The catalysed reaction is succinate + ATP + CoA = succinyl-CoA + ADP + phosphate. The enzyme catalyses GTP + succinate + CoA = succinyl-CoA + GDP + phosphate. It functions in the pathway carbohydrate metabolism; tricarboxylic acid cycle; succinate from succinyl-CoA (ligase route): step 1/1. Functionally, succinyl-CoA synthetase functions in the citric acid cycle (TCA), coupling the hydrolysis of succinyl-CoA to the synthesis of either ATP or GTP and thus represents the only step of substrate-level phosphorylation in the TCA. The beta subunit provides nucleotide specificity of the enzyme and binds the substrate succinate, while the binding sites for coenzyme A and phosphate are found in the alpha subunit. The protein is Succinate--CoA ligase [ADP-forming] subunit beta of Acinetobacter baumannii (strain AB307-0294).